Consider the following 392-residue polypeptide: Succinate--CoA ligase [ADP-forming] subunit beta (392 aa).

The 240-residue stretch at 9–248 (KGLFRDYGVS…LHEEDPTEVK (240 aa)) folds into the ATP-grasp domain. ATP contacts are provided by residues Lys-50, 57–59 (GRG), Val-106, and Glu-111. Mg(2+) is bound by residues Asn-203 and Asp-217. Residues Asn-268 and 325 to 327 (GIV) contribute to the substrate site.

It belongs to the succinate/malate CoA ligase beta subunit family. Heterotetramer of two alpha and two beta subunits. Requires Mg(2+) as cofactor.

The enzyme catalyses succinate + ATP + CoA = succinyl-CoA + ADP + phosphate. The catalysed reaction is GTP + succinate + CoA = succinyl-CoA + GDP + phosphate. The protein operates within carbohydrate metabolism; tricarboxylic acid cycle; succinate from succinyl-CoA (ligase route): step 1/1. Succinyl-CoA synthetase functions in the citric acid cycle (TCA), coupling the hydrolysis of succinyl-CoA to the synthesis of either ATP or GTP and thus represents the only step of substrate-level phosphorylation in the TCA. The beta subunit provides nucleotide specificity of the enzyme and binds the substrate succinate, while the binding sites for coenzyme A and phosphate are found in the alpha subunit. The sequence is that of Succinate--CoA ligase [ADP-forming] subunit beta from Salinibacter ruber (strain DSM 13855 / M31).